The chain runs to 117 residues: Acrylate reductase cytochrome subunit (117 aa).

The signal sequence occupies residues 1-22 (MKMYKLMLGLVLAGLVSLSAQA). Residues His-29, Cys-37, Cys-40, His-41, Cys-54, Cys-57, His-58, His-79, His-83, Cys-90, Cys-93, His-94, His-97, Cys-104, Cys-107, and His-108 each contribute to the heme c site.

In terms of assembly, the ArdAB flavocytochrome c is composed of a FAD-containing subunit (ArdA) and a heme c-containing subunit (ArdB). The cofactor is heme c.

The protein localises to the periplasm. Methacrylate acts as a competitive inhibitor of the acrylate reductase activity and suppresses the reductase activity in dose-dependent manner. Heme c-containing subunit of the ArdAB flavocytochrome c, which catalyzes the reduction of acrylate to propanoate and supports dimethylsulfoniopropionate-dependent anaerobic respiration. In vitro, can use the artificial electron donor methyl viologen. The natural electron donor is probably a low-potential cytochrome c. Also shows weak activity toward methacrylate in vitro (at a 22-fold lower rate) but cannot use other tested 2-enoates, including crotonic, fumaric, sorbic, urocanic, cinnamic, p-coumaric, caffeic or ferulic acids. The protein catalyzes a unidirectional reaction and cannot oxidize propanoate with phenazine metasulfate and dichlorophenolindophenol as electron acceptors. In Shewanella woodyi (strain ATCC 51908 / MS32), this protein is Acrylate reductase cytochrome subunit.